The following is a 371-amino-acid chain: Protein OSB2, chloroplastic (371 aa).

A chloroplast-targeting transit peptide spans 1–20; the sequence is MSLISKSLARIECSPFFYPR. The interval 45 to 64 is disordered; that stretch reads GKTGNGERKQRAKAPAKTPE. In terms of domain architecture, SSB spans 97–195; sequence VANWVNLIGF…VLVQNLNFIQ (99 aa). 2 PDF region regions span residues 237-289 and 312-360; these read WNHL…PKLE and WKDL…PKLP.

In terms of tissue distribution, expressed in the floral abscission zone.

The protein resides in the plastid. It localises to the chloroplast. In terms of biological role, binds preferentially single-stranded DNA. Does not bind to RNA. The sequence is that of Protein OSB2, chloroplastic (OSB2) from Arabidopsis thaliana (Mouse-ear cress).